Here is a 146-residue protein sequence, read N- to C-terminus: Ribonuclease H (146 aa).

The RNase H type-1 domain maps to 1-143 (MQKKIIVYTD…CDELARQAIK (143 aa)). Positions 10, 48, 70, and 135 each coordinate Mg(2+).

The protein belongs to the RNase H family. In terms of assembly, monomer. The cofactor is Mg(2+).

Its subcellular location is the cytoplasm. It carries out the reaction Endonucleolytic cleavage to 5'-phosphomonoester.. Functionally, endonuclease that specifically degrades the RNA of RNA-DNA hybrids. This chain is Ribonuclease H, found in Chlorobium phaeobacteroides (strain DSM 266 / SMG 266 / 2430).